The primary structure comprises 527 residues: MPNPTVAIVGLGALGLVTLKNLREEGFDAVGLDRNDYVGGLWHFEEGNKLTVMRSTLSNGSKQRGCFTDFPFPEDSPDFIPAEGIDRYLKDYAKHFGLLEHCRLRTSFHGARYDEKKQQWRLSLSTPDAPEPHFEWFDKVVFAMGADQIPSRPKIEGIEKFKGHVEHSMSFKNPETLAGKRVMVLGFGNTAADMATELAPIADQVYLAHRHGAIIVPRWVKGKPVDHVRTYRKYVILNLMNRYTPGLWEKTMNSVIGKLVHNTFDLKPEWRFDPAPSITNQRPLVNDELIPSLEKGSIISTHGLARVIDENTVETSDGQRYEVDAILFCTGFTVDYSVVGMDADPCRATTTDWQKSRGFTGRPLPRLYQNIFSLDHPETLAFIGHLSFMNPAFFMFDLASMAVAQLWKDPSGFPSKAEMNKQVDDQHAWVIDLAKKGPVTPSIVKASEWMEWVDRVIGSGLPEHLGYTMKGWNFWMRDRKFCNIMMDGLLSPHAYRVFPGKRKAWPGARDAIIAMNADREARFGPMD.

The signal sequence occupies residues 1-19 (MPNPTVAIVGLGALGLVTL). Asn-59 carries an N-linked (GlcNAc...) asparagine glycan.

The protein belongs to the FMO family. Might be part of an extracellular enzyme complex composed of GIP1, aurF, aurO and aurS. FAD serves as cofactor.

The protein localises to the secreted. It localises to the extracellular space. It participates in pigment biosynthesis. Its function is as follows. Monooxygenase; part of the gene cluster that mediates the biosynthesis of aurofusarin, a red mycelium pigment which is acting as a mycotoxin. The first step is performed by the polyketide synthase which condenses one acetyl-CoA and 6 malonyl-CoA units to form the first intermediate, the cyclic heptaketide and yellow pigment YWA1. The C2 hydroxyl group in the pyrone ring of YWA1 is probably formed during ring closure by an aldol-type cyclization reaction. The dehydratase aurZ then acts as the first tailoring enzyme in the aurofusarin biosynthetic pathway by converting YWA1 to nor-rubrofusarin. Nor-rubrofusarin is then methylated to rubrofusarin by the O-methyltransferase aurJ. Rubrofusarin is then transported across the plasma membrane by the rubrofusarin-specific pump aurT for further enzymatic processing by the extracellular complex composed of GIP1, aurF, aurO and aurS to yield aurofusarin. The polypeptide is Monooxygenase aurF (Gibberella zeae (strain ATCC MYA-4620 / CBS 123657 / FGSC 9075 / NRRL 31084 / PH-1) (Wheat head blight fungus)).